The sequence spans 85 residues: Small ribosomal subunit protein bS18c (85 aa).

Belongs to the bacterial ribosomal protein bS18 family. As to quaternary structure, part of the 30S ribosomal subunit.

Its subcellular location is the plastid. It is found in the chloroplast. In Tupiella akineta (Green alga), this protein is Small ribosomal subunit protein bS18c.